The primary structure comprises 365 residues: Putative agmatine deiminase (365 aa).

Glu-214 and Asp-220 together coordinate agmatine. Cys-357 functions as the Amidino-cysteine intermediate in the catalytic mechanism.

It belongs to the agmatine deiminase family. Tetramer of two homodimers.

The enzyme catalyses agmatine + H2O = N-carbamoylputrescine + NH4(+). In Enterococcus faecalis (strain ATCC 700802 / V583), this protein is Putative agmatine deiminase.